The following is a 102-amino-acid chain: uncharacterized protein (102 aa).

This is an uncharacterized protein from Bacillus subtilis (strain 168).